Reading from the N-terminus, the 507-residue chain is METIRADEISNIIRERIEQYTREVKIVNTGTVLQVGDGIARIYGLDEVMAGELVEFEEGTIGIALNLESNNVGVVLMGDGLLIQEGSSVKATGRIAQIPVSEAYLGRVINALAKPIDGRGEISSSDSRLIESPAPGIILRRSVYEPLQTGLIAIDSMIPIGRGQRELIIGDRQTGKTAVATDTILNQQGQNVICVYVAIGQKASSVAQVVSTLQERGAMEYTIIVAETADSPATLQYLAPYTGAALAEYFMYRKQHTSIIYDDPSKQAQAYRQMSLLLRRPPGREAYPGDVFYLHSRLLERAAKLSSALGEGSMTALPIVETQSGDVSAYIPTNVISITDGQIFLSADLFNAGIRPAINVGISVSRVGSAAQIKAMKQVAGKLKLELAQFAELEAFAQFASDLDKATQNQLARGQRLRELLKQSQSAPLTVDEQIMTVYTGTNGYLDSLEIAQVRKFLVELRTYVKTNKPQFQEIISSTKTFTPEAEVLLKEAIQEQMERFLLQDQV.

G170–T177 is an ATP binding site.

Belongs to the ATPase alpha/beta chains family. In terms of assembly, F-type ATPases have 2 components, CF(1) - the catalytic core - and CF(0) - the membrane proton channel. CF(1) has five subunits: alpha(3), beta(3), gamma(1), delta(1), epsilon(1). CF(0) has four main subunits: a, b, b' and c.

It is found in the plastid. Its subcellular location is the chloroplast thylakoid membrane. It catalyses the reaction ATP + H2O + 4 H(+)(in) = ADP + phosphate + 5 H(+)(out). Produces ATP from ADP in the presence of a proton gradient across the membrane. The alpha chain is a regulatory subunit. In Cucumis sativus (Cucumber), this protein is ATP synthase subunit alpha, chloroplastic.